The following is a 259-amino-acid chain: Thiazole synthase (259 aa).

Lys99 acts as the Schiff-base intermediate with DXP in catalysis. 1-deoxy-D-xylulose 5-phosphate contacts are provided by residues Gly161, 187-188 (AG), and 209-210 (NT).

The protein belongs to the ThiG family. Homotetramer. Forms heterodimers with either ThiH or ThiS.

It localises to the cytoplasm. It carries out the reaction [ThiS sulfur-carrier protein]-C-terminal-Gly-aminoethanethioate + 2-iminoacetate + 1-deoxy-D-xylulose 5-phosphate = [ThiS sulfur-carrier protein]-C-terminal Gly-Gly + 2-[(2R,5Z)-2-carboxy-4-methylthiazol-5(2H)-ylidene]ethyl phosphate + 2 H2O + H(+). The protein operates within cofactor biosynthesis; thiamine diphosphate biosynthesis. In terms of biological role, catalyzes the rearrangement of 1-deoxy-D-xylulose 5-phosphate (DXP) to produce the thiazole phosphate moiety of thiamine. Sulfur is provided by the thiocarboxylate moiety of the carrier protein ThiS. In vitro, sulfur can be provided by H(2)S. The chain is Thiazole synthase from Nautilia profundicola (strain ATCC BAA-1463 / DSM 18972 / AmH).